The chain runs to 162 residues: Ribonuclease P protein component (162 aa).

The disordered stretch occupies residues 1–63 (MDEKDLATQP…PPAAGGKLLS (63 aa)). Residues 21–38 (GPHEDPRRQEGVEAEKAE) are compositionally biased toward basic and acidic residues.

It belongs to the RnpA family. Consists of a catalytic RNA component (M1 or rnpB) and a protein subunit.

It carries out the reaction Endonucleolytic cleavage of RNA, removing 5'-extranucleotides from tRNA precursor.. Functionally, RNaseP catalyzes the removal of the 5'-leader sequence from pre-tRNA to produce the mature 5'-terminus. It can also cleave other RNA substrates such as 4.5S RNA. The protein component plays an auxiliary but essential role in vivo by binding to the 5'-leader sequence and broadening the substrate specificity of the ribozyme. This is Ribonuclease P protein component from Thermus scotoductus.